Reading from the N-terminus, the 134-residue chain is Small ribosomal subunit protein uS8c (134 aa).

Belongs to the universal ribosomal protein uS8 family. In terms of assembly, part of the 30S ribosomal subunit.

Its subcellular location is the plastid. The protein localises to the chloroplast. Its function is as follows. One of the primary rRNA binding proteins, it binds directly to 16S rRNA central domain where it helps coordinate assembly of the platform of the 30S subunit. The protein is Small ribosomal subunit protein uS8c (rps8) of Arabidopsis thaliana (Mouse-ear cress).